Consider the following 128-residue polypeptide: Glycine cleavage system H protein (128 aa).

The Lipoyl-binding domain occupies 24 to 106; it reads VYSVGITEHA…YTDGWLFSIK (83 aa). Lys-65 carries the N6-lipoyllysine modification.

It belongs to the GcvH family. In terms of assembly, the glycine cleavage system is composed of four proteins: P, T, L and H. Requires (R)-lipoate as cofactor.

In terms of biological role, the glycine cleavage system catalyzes the degradation of glycine. The H protein shuttles the methylamine group of glycine from the P protein to the T protein. The polypeptide is Glycine cleavage system H protein (Yersinia enterocolitica serotype O:8 / biotype 1B (strain NCTC 13174 / 8081)).